The primary structure comprises 92 residues: RNA-binding protein Hfq (92 aa).

Residues 9 to 68 (DPYLNALRRERIPVSIYLVNGIKLQGQIESFDQFVILLKNTVSQMVYKHAISTVVPARSV) enclose the Sm domain. Residues 69-81 (SHNNGGTSHTQQA) are compositionally biased toward polar residues. The interval 69–92 (SHNNGGTSHTQQAPAVEAVADKAE) is disordered.

The protein belongs to the Hfq family. Homohexamer.

In terms of biological role, RNA chaperone that binds small regulatory RNA (sRNAs) and mRNAs to facilitate mRNA translational regulation in response to envelope stress, environmental stress and changes in metabolite concentrations. Also binds with high specificity to tRNAs. The protein is RNA-binding protein Hfq of Actinobacillus pleuropneumoniae serotype 5b (strain L20).